Consider the following 55-residue polypeptide: ATP synthase F(0) complex subunit 8 (55 aa).

Residues leucine 4–isoleucine 24 form a helical membrane-spanning segment.

It belongs to the ATPase protein 8 family. Component of the ATP synthase complex composed at least of ATP5F1A/subunit alpha, ATP5F1B/subunit beta, ATP5MC1/subunit c (homooctomer), MT-ATP6/subunit a, MT-ATP8/subunit 8, ATP5ME/subunit e, ATP5MF/subunit f, ATP5MG/subunit g, ATP5MK/subunit k, ATP5MJ/subunit j, ATP5F1C/subunit gamma, ATP5F1D/subunit delta, ATP5F1E/subunit epsilon, ATP5PF/subunit F6, ATP5PB/subunit b, ATP5PD/subunit d, ATP5PO/subunit OSCP. ATP synthase complex consists of a soluble F(1) head domain (subunits alpha(3) and beta(3)) - the catalytic core - and a membrane F(0) domain - the membrane proton channel (subunits c, a, 8, e, f, g, k and j). These two domains are linked by a central stalk (subunits gamma, delta, and epsilon) rotating inside the F1 region and a stationary peripheral stalk (subunits F6, b, d, and OSCP).

The protein localises to the mitochondrion membrane. In terms of biological role, subunit 8, of the mitochondrial membrane ATP synthase complex (F(1)F(0) ATP synthase or Complex V) that produces ATP from ADP in the presence of a proton gradient across the membrane which is generated by electron transport complexes of the respiratory chain. ATP synthase complex consist of a soluble F(1) head domain - the catalytic core - and a membrane F(1) domain - the membrane proton channel. These two domains are linked by a central stalk rotating inside the F(1) region and a stationary peripheral stalk. During catalysis, ATP synthesis in the catalytic domain of F(1) is coupled via a rotary mechanism of the central stalk subunits to proton translocation. In vivo, can only synthesize ATP although its ATP hydrolase activity can be activated artificially in vitro. Part of the complex F(0) domain. The polypeptide is ATP synthase F(0) complex subunit 8 (Dicentrarchus labrax (European seabass)).